Reading from the N-terminus, the 307-residue chain is MSHISVLLFETVESLLADRTTGVYIDATFGRGGHTRLLLSKLDENARVYAFDKDPQALEVAAALAQEDPRFTIIHASFADIKEKMQEIGVQSVDGIMADLGVSSPQLDQAERGFSFMQDGPLDMRMDNSKGLTAAEWLLEVEEEDLANIIYQYGEERYSRRIARAIKQAGKLDTTAQLAEIVKTAHPKWEKHKHPATRTFQAIRIAINKELDDIEVFLPQAVDLLKPKGRLSVISFHSLEDRLIKQFIQKESTLAEDSGWGMPQQQVDTRRLKKISRVRASEEEVKANPRSRSAWLRVAERLEQKGA.

Residues 32 to 34, D52, F78, D99, and Q106 each bind S-adenosyl-L-methionine; that span reads GGH.

This sequence belongs to the methyltransferase superfamily. RsmH family.

It localises to the cytoplasm. The catalysed reaction is cytidine(1402) in 16S rRNA + S-adenosyl-L-methionine = N(4)-methylcytidine(1402) in 16S rRNA + S-adenosyl-L-homocysteine + H(+). Specifically methylates the N4 position of cytidine in position 1402 (C1402) of 16S rRNA. The sequence is that of Ribosomal RNA small subunit methyltransferase H from Acinetobacter baumannii (strain AB307-0294).